A 218-amino-acid chain; its full sequence is Ribonuclease T (218 aa).

The Exonuclease domain maps to 20-194 (VVIDVETAGF…YDAERTAELF (175 aa)). Asp23, Glu25, His181, and Asp186 together coordinate Mg(2+). The Proton donor/acceptor role is filled by His181.

It belongs to the RNase T family. In terms of assembly, homodimer. Mg(2+) is required as a cofactor.

Trims short 3' overhangs of a variety of RNA species, leaving a one or two nucleotide 3' overhang. Responsible for the end-turnover of tRNA: specifically removes the terminal AMP residue from uncharged tRNA (tRNA-C-C-A). Also appears to be involved in tRNA biosynthesis. The sequence is that of Ribonuclease T from Baumannia cicadellinicola subsp. Homalodisca coagulata.